Consider the following 485-residue polypeptide: Lysophospholipid acyltransferase 5 (485 aa).

A2 is modified (N-acetylalanine). Transmembrane regions (helical) follow at residues 35–55 (ASEQALRLIISIFLGYPFALF), 82–102 (YNFGTQLYHSLLCIVLQFLIL), 108–128 (TITAVLTTFCVQMGYLLAGYY), 139–158 (WTMPHCVLTLKLIGLAMDYY), 176–196 (IWGVPSLLEISGFSYFYGAFL), 232–252 (LALGLVYLVGYTLLSPHITED), and 283–303 (VTCWLVTEGVCILTGLGFNGL). Active-site residues include N336 and H372. Helical transmembrane passes span 362 to 382 (GLSLLFLALWHGLHSGYLVCF), 420 to 440 (LAQQTIHWLFMGYSMTAFCLF), and 448 to 468 (VYKSIYFLGHVFFLSLLFILP). Positions 482-485 (KKME) match the Di-lysine motif motif.

It belongs to the membrane-bound acyltransferase family.

The protein resides in the endoplasmic reticulum membrane. The catalysed reaction is a 1-acyl-sn-glycero-3-phosphocholine + an acyl-CoA = a 1,2-diacyl-sn-glycero-3-phosphocholine + CoA. It catalyses the reaction a 1-acyl-sn-glycero-3-phosphoethanolamine + an acyl-CoA = a 1,2-diacyl-sn-glycero-3-phosphoethanolamine + CoA. The enzyme catalyses a 1-acyl-sn-glycero-3-phospho-L-serine + an acyl-CoA = a 1,2-diacyl-sn-glycero-3-phospho-L-serine + CoA. It carries out the reaction (9Z,12Z)-octadecadienoyl-CoA + a 1-acyl-sn-glycero-3-phosphocholine = 1-acyl-2-(9Z,12Z)-octadecadienoyl-sn-glycero-3-phosphocholine + CoA. The catalysed reaction is (5Z,8Z,11Z,14Z)-eicosatetraenoyl-CoA + a 1-acyl-sn-glycero-3-phosphocholine = 1-acyl-2-(5Z,8Z,11Z,14Z-eicosatetraenoyl)-sn-glycero-3-phosphocholine + CoA. It catalyses the reaction dodecanoyl-CoA + 1-hexadecanoyl-sn-glycero-3-phosphocholine = 1-hexadecanoyl-2-dodecanoyl-sn-glycero-3-phosphocholine + CoA. The enzyme catalyses octadecanoyl-CoA + 1-hexadecanoyl-sn-glycero-3-phosphocholine = 1-hexadecanoyl-2-octadecanoyl-sn-glycero-3-phosphocholine + CoA. It carries out the reaction 1-dodecanoyl-sn-glycero-3-phosphocholine + hexadecanoyl-CoA = 1-dodecanoyl-2-hexadecanoyl-sn-glycero-3-phosphocholine + CoA. The catalysed reaction is 1-tetradecanoyl-sn-glycero-3-phosphocholine + hexadecanoyl-CoA = 1-tetradecanoyl-2-hexadecanoyl-sn-glycero-3-phosphocholine + CoA. It catalyses the reaction 1-hexadecanoyl-sn-glycero-3-phosphocholine + hexadecanoyl-CoA = 1,2-dihexadecanoyl-sn-glycero-3-phosphocholine + CoA. The enzyme catalyses 1-octadecanoyl-sn-glycero-3-phosphocholine + hexadecanoyl-CoA = 1-octadecanoyl-2-hexadecanoyl-sn-glycero-3-phosphocholine + CoA. It carries out the reaction 1-(9Z-octadecenoyl)-sn-glycero-3-phosphocholine + hexadecanoyl-CoA = 1-(9Z-octadecenoyl)-2-hexadecanoyl-sn-glycero-3-phosphocholine + CoA. The catalysed reaction is (9Z)-hexadecenoyl-CoA + 1-hexadecanoyl-sn-glycero-3-phosphocholine = 1-hexadecanoyl-2-(9Z-hexadecenoyl)-sn-glycero-3-phosphocholine + CoA. It catalyses the reaction 1-hexadecanoyl-sn-glycero-3-phosphocholine + (9Z)-octadecenoyl-CoA = 1-hexadecanoyl-2-(9Z-octadecenoyl)-sn-glycero-3-phosphocholine + CoA. The enzyme catalyses (9Z,12Z)-octadecadienoyl-CoA + 1-hexadecanoyl-sn-glycero-3-phosphocholine = 1-hexadecanoyl-2-(9Z,12Z-octadecadienoyl)-sn-glycero-3-phosphocholine + CoA. It carries out the reaction 1-dodecanoyl-sn-glycero-3-phosphocholine + (5Z,8Z,11Z,14Z)-eicosatetraenoyl-CoA = 1-dodecanoyl-2-(5Z,8Z,11Z,14Z)-eicosatetraenoyl-sn-glycero-3-phosphocholine + CoA. The catalysed reaction is (5Z,8Z,11Z,14Z)-eicosatetraenoyl-CoA + 1-hexadecanoyl-sn-glycero-3-phosphocholine = 1-hexadecanoyl-2-(5Z,8Z,11Z,14Z-eicosatetraenoyl)-sn-glycero-3-phosphocholine + CoA. It catalyses the reaction 1-octadecanoyl-sn-glycero-3-phosphocholine + (5Z,8Z,11Z,14Z)-eicosatetraenoyl-CoA = 1-octadecanoyl-2-(5Z,8Z,11Z,14Z-eicosatetraenoyl)-sn-glycero-3-phosphocholine + CoA. The enzyme catalyses 1-eicosanoyl-sn-glycero-3-phosphocholine + (5Z,8Z,11Z,14Z)-eicosatetraenoyl-CoA = 1-eicosanoyl-2-(5Z,8Z,11Z,14Z)-eicosatetraenoyl-sn-glycero-3-phosphocholine + CoA. It carries out the reaction 1-(9Z-octadecenoyl)-sn-glycero-3-phosphocholine + (9Z)-octadecenoyl-CoA = 1,2-di-(9Z-octadecenoyl)-sn-glycero-3-phosphocholine + CoA. The catalysed reaction is 1-(9Z-octadecenoyl)-sn-glycero-3-phosphocholine + (9Z,12Z)-octadecadienoyl-CoA = 1-(9Z)-octadecenoyl-2-(9Z,12Z)-octadecadienoyl-sn-glycero-3-phosphocholine + CoA. It catalyses the reaction 1-(9Z-octadecenoyl)-sn-glycero-3-phosphocholine + (5Z,8Z,11Z,14Z)-eicosatetraenoyl-CoA = 1-(9Z)-octadecenoyl-2-(5Z,8Z,11Z,14Z)-icosatetraenoyl-sn-glycero-3-phosphocholine + CoA. The enzyme catalyses a 1-acyl-sn-glycero-3-phosphoethanolamine + (9Z,12Z)-octadecadienoyl-CoA = 1-acyl-2-(9Z,12Z)-octadecadienoyl-sn-glycero-3-phosphoethanolamine + CoA. It carries out the reaction 1-(9Z-octadecenoyl)-sn-glycero-3-phosphoethanolamine + (9Z,12Z)-octadecadienoyl-CoA = 1-(9Z)-octadecenoyl-2-(9Z,12Z)-octadecadienoyl-sn-glycero-3-phosphoethanolamine + CoA. The catalysed reaction is 1-(10Z-heptadecenoyl)-sn-glycero-3-phosphoethanolamine + (9Z,12Z)-octadecadienoyl-CoA = 1-(10Z-heptadecenoyl)-2-(9Z,12Z-octadecadienoyl)-sn-glycero-3-phosphoethanolamine + CoA. It catalyses the reaction a 1-acyl-sn-glycero-3-phosphoethanolamine + (5Z,8Z,11Z,14Z)-eicosatetraenoyl-CoA = 1-acyl-2-(5Z,8Z,11Z,14Z)-eicosatetraenoyl-sn-glycero-3-phosphoethanolamine + CoA. The enzyme catalyses 1-hexadecanoyl-sn-glycero-3-phosphoethanolamine + (5Z,8Z,11Z,14Z)-eicosatetraenoyl-CoA = 1-hexadecanoyl-2-(5Z,8Z,11Z,14Z-eicosatetraenoyl)-sn-glycero-3-phosphoethanolamine + CoA. It carries out the reaction 1-(9Z-octadecenoyl)-sn-glycero-3-phosphoethanolamine + (5Z,8Z,11Z,14Z)-eicosatetraenoyl-CoA = 1-(9Z)-octadecenoyl-2-(5Z,8Z,11Z,14Z)-eicosatetraenoyl-sn-glycero-3-phosphoethanolamine + CoA. The catalysed reaction is 1-(10Z-heptadecenoyl)-sn-glycero-3-phosphoethanolamine + (5Z,8Z,11Z,14Z)-eicosatetraenoyl-CoA = 1-(10Z-heptadecenoyl)-2-(5Z,8Z,11Z,14Z-eicosatetraenoyl)-sn-glycero-3-phosphoethanolamine + CoA. It catalyses the reaction a 1-O-(1Z-alkenyl)-sn-glycero-3-phosphoethanolamine + (5Z,8Z,11Z,14Z)-eicosatetraenoyl-CoA = 1-O-(1Z)-alkenyl-2-(5Z,8Z,11Z,14Z)-eicosatetraenoyl-sn-glycero-3-phosphoethanolamine + CoA. The enzyme catalyses a 1-acyl-sn-glycero-3-phospho-L-serine + (9Z,12Z)-octadecadienoyl-CoA = 1-acyl-2-(9Z,12Z-octadecadienoyl)-sn-glycero-3-phospho-L-serine + CoA. It carries out the reaction a 1-acyl-sn-glycero-3-phospho-L-serine + (5Z,8Z,11Z,14Z)-eicosatetraenoyl-CoA = 1-acyl-2-(5Z,8Z,11Z,14Z-eicosatetraenoyl)-sn-glycero-3-phospho-L-serine + CoA. The catalysed reaction is 1-hexadecanoyl-sn-glycero-3-phospho-L-serine + (9Z)-octadecenoyl-CoA = 1-hexadecanoyl-2-(9Z-octadecenoyl)-sn-glycero-3-phospho-L-serine + CoA. It catalyses the reaction 1-(9Z-octadecenoyl)-sn-glycero-3-phospho-L-serine + (9Z)-octadecenoyl-CoA = 1,2-di-(9Z)-octadecenoyl-sn-glycero-3-phospho-L-serine + CoA. The enzyme catalyses 1-hexadecanoyl-sn-glycero-3-phospho-L-serine + (9Z,12Z)-octadecadienoyl-CoA = 1-hexadecanoyl-2-(9Z,12Z-octadecadienoyl)-sn-glycero-3-phospho-L-serine + CoA. It carries out the reaction 1-(9Z-octadecenoyl)-sn-glycero-3-phospho-L-serine + (9Z,12Z)-octadecadienoyl-CoA = 1-(9Z-octadecenoyl)-2-(9Z,12Z-octadienoyl)-sn-glycero-3-phospho-L-serine + CoA. The catalysed reaction is 1-hexadecanoyl-sn-glycero-3-phospho-L-serine + (5Z,8Z,11Z,14Z)-eicosatetraenoyl-CoA = 1-hexadecanoyl-2-(5Z,8Z,11Z,14Z-eicosatetraenoyl)-sn-glycero-3-phospho-L-serine + CoA. It catalyses the reaction 1-(9Z-octadecenoyl)-sn-glycero-3-phospho-L-serine + (5Z,8Z,11Z,14Z)-eicosatetraenoyl-CoA = 1-(9Z-octadecenoyl)-2-(5Z,8Z,11Z,14Z-eicosatetraenoyl)-sn-glycero-3-phospho-L-serine + CoA. Its pathway is lipid metabolism; phospholipid metabolism. In terms of biological role, lysophospholipid O-acyltransferase (LPLAT) that catalyzes the reacylation step of the phospholipid remodeling process also known as the Lands cycle. Catalyzes transfer of the fatty acyl chain from fatty acyl-CoA to 1-acyl lysophospholipid to form various classes of phospholipids. Converts 1-acyl lysophosphatidylcholine (LPC) into phosphatidylcholine (PC) (LPCAT activity), 1-acyl lysophosphatidylserine (LPS) into phosphatidylserine (PS) (LPSAT activity) and 1-acyl lysophosphatidylethanolamine (LPE) into phosphatidylethanolamine (PE) (LPEAT activity). Favors polyunsaturated fatty acyl-CoAs as acyl donors compared to saturated fatty acyl-CoAs. Has higher activity for LPC acyl acceptors compared to LPEs and LPSs. Can also transfer the fatty acyl chain from fatty acyl-CoA to 1-O-alkyl lysophospholipid or 1-O-alkenyl lysophospholipid with lower efficiency. Acts as a major LPC O-acyltransferase in liver and intestine. As a component of the liver X receptor/NR1H3 or NR1H2 signaling pathway, mainly catalyzes the incorporation of arachidonate into PCs of endoplasmic reticulum (ER) membranes, increasing membrane dynamics and enabling triacylglycerols transfer to nascent very low-density lipoprotein (VLDL) particles. Promotes processing of sterol regulatory protein SREBF1 in hepatocytes, likely by facilitating the translocation of SREBF1-SCAP complex from ER to the Golgi apparatus. Participates in mechanisms by which the liver X receptor/NR1H3 or NR1H2 signaling pathway counteracts lipid-induced ER stress response and inflammation. Down-regulates hepatic inflammation by limiting arachidonic acid availability for synthesis of inflammatory eicosanoids, such as prostaglandins. In enterocytes, acts as a component of a gut-brain feedback loop that coordinates dietary lipid absorption and food intake. Regulates the abundance of PCs containing linoleate and arachidonate in enterocyte membranes, enabling passive diffusion of fatty acids and cholesterol across the membrane for efficient chylomicron assembly. In the intestinal crypt, acts as a component of dietary-responsive phospholipid-cholesterol axis, regulating the biosynthesis of cholesterol and its mitogenic effects on intestinal stem cells. This is Lysophospholipid acyltransferase 5 (LPCAT3) from Bos taurus (Bovine).